The sequence spans 708 residues: MKEWRRNILGRELVVQYGKVAKQSSGSALVRFGDTVVLATANISDKAVEGIDFVPLTVEFQERFYAAGKIPGGFIKREGKPSESAILSARLIDRPIRPLFPKKLRNEVQVIVTVLSVDPNVPPDVVGIFAASLALNVSKIPFEGIVAGIRVGYRDGQFIALPSEEDIEKGLMDITVAGTKDAVTMVEGEAKEVTEEDMVKALRFAHSVIKELVDFQEEILSEFNVEKIPVVEPTPPEGLVEAFKDLLNKEELERRILVKVKKEREVALKEYEEQLLNQIAEKLSVTDLEGIKPFVSELYEDAVKKTMRRLIVEKGIRADGRKPTEIRPISCEVGLFPRTHGSALFTRGETQSLGIVTLGAPMDVQIIDTLLEEGVKRFMLHYNFPPFCTGEVKPLRGPSRREIGHGHLAERALKNMLPPEEEFPYTIRVVSEILESNGSSSMATVCSGSLALMDAGVPIKKHVAGIAMGLILEEDAEIILTDIIGMEDHYGDMDFKVAGTRDGITAFQMDCKVSGVSDELLMKALMQAREARMYILDRMYETISAPRPHLSKYAPIIKVTKVDPEKVADVIGPGGRVIKKIIKDFDVKVEIDDETGLVKVVGSSEENVDKAIELIREIAKEIEVGEVLEGKVTRIEPYGLFIEVRPGKIGLLHQSKVGEDMRQFLKKVKVGDTIKVQVINIDDLGRLQFKRVTEGENTQHGKTHSKRN.

Mg(2+) contacts are provided by Asp-488 and Asp-494. The KH domain maps to 555 to 615; that stretch reads PIIKVTKVDP…ENVDKAIELI (61 aa). The 68-residue stretch at 625–692 folds into the S1 motif domain; it reads GEVLEGKVTR…DLGRLQFKRV (68 aa).

The protein belongs to the polyribonucleotide nucleotidyltransferase family. The cofactor is Mg(2+).

The protein resides in the cytoplasm. The catalysed reaction is RNA(n+1) + phosphate = RNA(n) + a ribonucleoside 5'-diphosphate. Involved in mRNA degradation. Catalyzes the phosphorolysis of single-stranded polyribonucleotides processively in the 3'- to 5'-direction. The polypeptide is Polyribonucleotide nucleotidyltransferase (Thermotoga sp. (strain RQ2)).